The following is a 419-amino-acid chain: UDP-N-acetylglucosamine 1-carboxyvinyltransferase (419 aa).

Phosphoenolpyruvate is bound at residue 22 to 23 (KN). Position 93 (R93) interacts with UDP-N-acetyl-alpha-D-glucosamine. C117 (proton donor) is an active-site residue. At C117 the chain carries 2-(S-cysteinyl)pyruvic acid O-phosphothioketal. UDP-N-acetyl-alpha-D-glucosamine is bound by residues D307 and I329.

It belongs to the EPSP synthase family. MurA subfamily.

The protein localises to the cytoplasm. It catalyses the reaction phosphoenolpyruvate + UDP-N-acetyl-alpha-D-glucosamine = UDP-N-acetyl-3-O-(1-carboxyvinyl)-alpha-D-glucosamine + phosphate. It functions in the pathway cell wall biogenesis; peptidoglycan biosynthesis. Its function is as follows. Cell wall formation. Adds enolpyruvyl to UDP-N-acetylglucosamine. The sequence is that of UDP-N-acetylglucosamine 1-carboxyvinyltransferase from Pseudoalteromonas atlantica (strain T6c / ATCC BAA-1087).